The sequence spans 512 residues: Flavonoid 3'-monooxygenase (512 aa).

The helical transmembrane segment at 1 to 21 (MEILSLILYTVIFSFLLQFIL) threads the bilayer. Topologically, residues 22 to 512 (RSFFRKRYPL…PRLEAQAYIG (491 aa)) are cytoplasmic. A heme-binding site is contributed by cysteine 447.

The protein belongs to the cytochrome P450 family. It depends on heme as a cofactor. As to expression, high expression in petals and ovaries and to a lower extent in sepals, pedicels, anthers and stems. Not detected in leaves, style or roots.

Its subcellular location is the endoplasmic reticulum membrane. It catalyses the reaction a 3'-unsubstituted flavone + reduced [NADPH--hemoprotein reductase] + O2 = a 3'-hydroxyflavone + oxidized [NADPH--hemoprotein reductase] + H2O + H(+). It functions in the pathway secondary metabolite biosynthesis; flavonoid biosynthesis. Functionally, catalyzes the 3'-hydroxylation of the flavonoid B-ring to the 3',4'-hydroxylated state. Convert naringenin to eriodictyol and dihydrokaempferol to dihydroquercetin. The chain is Flavonoid 3'-monooxygenase (CYP75B2) from Petunia hybrida (Petunia).